The sequence spans 140 residues: Transcription antitermination protein NusB (140 aa).

This sequence belongs to the NusB family.

Functionally, involved in transcription antitermination. Required for transcription of ribosomal RNA (rRNA) genes. Binds specifically to the boxA antiterminator sequence of the ribosomal RNA (rrn) operons. This is Transcription antitermination protein NusB from Alteromonas mediterranea (strain DSM 17117 / CIP 110805 / LMG 28347 / Deep ecotype).